Reading from the N-terminus, the 146-residue chain is Leptin (146 aa).

A disulfide bridge links C96 with C146.

The protein belongs to the leptin family.

It localises to the secreted. Functionally, key player in the regulation of energy balance and body weight control. Once released into the circulation, has central and peripheral effects by binding LEPR, found in many tissues, which results in the activation of several major signaling pathways. In the hypothalamus, acts as an appetite-regulating factor that induces a decrease in food intake and an increase in energy consumption by inducing anorexinogenic factors and suppressing orexigenic neuropeptides, also regulates bone mass and secretion of hypothalamo-pituitary-adrenal hormones. In the periphery, increases basal metabolism, influences reproductive function, regulates pancreatic beta-cell function and insulin secretion, is pro-angiogenic for endothelial cell and affects innate and adaptive immunity. In the arcuate nucleus of the hypothalamus, activates by depolarization POMC neurons inducing FOS and SOCS3 expression to release anorexigenic peptides and inhibits by hyperpolarization NPY neurons inducing SOCS3 with a consequent reduction on release of orexigenic peptides. In addition to its known satiety inducing effect, has a modulatory role in nutrient absorption. In the intestine, reduces glucose absorption by enterocytes by activating PKC and leading to a sequential activation of p38, PI3K and ERK signaling pathways which exerts an inhibitory effect on glucose absorption. Acts as a growth factor on certain tissues, through the activation of different signaling pathways increases expression of genes involved in cell cycle regulation such as CCND1, via JAK2-STAT3 pathway, or VEGFA, via MAPK1/3 and PI3K-AKT1 pathways. May also play an apoptotic role via JAK2-STAT3 pathway and up-regulation of BIRC5 expression. Pro-angiogenic, has mitogenic activity on vascular endothelial cells and plays a role in matrix remodeling by regulating the expression of matrix metalloproteinases (MMPs) and tissue inhibitors of metalloproteinases (TIMPs). In innate immunity, modulates the activity and function of neutrophils by increasing chemotaxis and the secretion of oxygen radicals. Increases phagocytosis by macrophages and enhances secretion of pro-inflammatory mediators. Increases cytotoxic ability of NK cells. Plays a pro-inflammatory role, in synergy with IL1B, by inducing NOS2 which promotes the production of IL6, IL8 and Prostaglandin E2, through a signaling pathway that involves JAK2, PI3K, MAP2K1/MEK1 and MAPK14/p38. In adaptive immunity, promotes the switch of memory T-cells towards T helper-1 cell immune responses. Increases CD4(+)CD25(-) T-cell proliferation and reduces autophagy during TCR (T-cell receptor) stimulation, through MTOR signaling pathway activation and BCL2 up-regulation. The chain is Leptin (LEP) from Ovis aries (Sheep).